The following is a 446-amino-acid chain: tRNA-2-methylthio-N(6)-dimethylallyladenosine synthase (446 aa).

The region spanning 2–122 (KKAYVKSYGC…LPDLLRQSRE (121 aa)) is the MTTase N-terminal domain. [4Fe-4S] cluster-binding residues include cysteine 11, cysteine 47, cysteine 85, cysteine 157, cysteine 161, and cysteine 164. The 233-residue stretch at 143-375 (RNRGVTGFLT…QQLLDQQRHA (233 aa)) folds into the Radical SAM core domain. Positions 378–440 (AAAVGTVAEI…SNSLFGEVLE (63 aa)) constitute a TRAM domain.

Belongs to the methylthiotransferase family. MiaB subfamily. Monomer. [4Fe-4S] cluster serves as cofactor.

It is found in the cytoplasm. The catalysed reaction is N(6)-dimethylallyladenosine(37) in tRNA + (sulfur carrier)-SH + AH2 + 2 S-adenosyl-L-methionine = 2-methylsulfanyl-N(6)-dimethylallyladenosine(37) in tRNA + (sulfur carrier)-H + 5'-deoxyadenosine + L-methionine + A + S-adenosyl-L-homocysteine + 2 H(+). Catalyzes the methylthiolation of N6-(dimethylallyl)adenosine (i(6)A), leading to the formation of 2-methylthio-N6-(dimethylallyl)adenosine (ms(2)i(6)A) at position 37 in tRNAs that read codons beginning with uridine. This Methylorubrum populi (strain ATCC BAA-705 / NCIMB 13946 / BJ001) (Methylobacterium populi) protein is tRNA-2-methylthio-N(6)-dimethylallyladenosine synthase.